We begin with the raw amino-acid sequence, 326 residues long: Small ribosomal subunit biogenesis GTPase RsgA (326 aa).

A CP-type G domain is found at 80 to 241 (LSHQMHIIAS…IIDTPGIKGF (162 aa)). Residues 129–132 (NKID) and 183–191 (GHSGVGKST) each bind GTP. 4 residues coordinate Zn(2+): Cys265, Cys270, His272, and Cys278.

This sequence belongs to the TRAFAC class YlqF/YawG GTPase family. RsgA subfamily. Monomer. Associates with 30S ribosomal subunit, binds 16S rRNA. Zn(2+) is required as a cofactor.

Its subcellular location is the cytoplasm. In terms of biological role, one of several proteins that assist in the late maturation steps of the functional core of the 30S ribosomal subunit. Helps release RbfA from mature subunits. May play a role in the assembly of ribosomal proteins into the subunit. Circularly permuted GTPase that catalyzes slow GTP hydrolysis, GTPase activity is stimulated by the 30S ribosomal subunit. The polypeptide is Small ribosomal subunit biogenesis GTPase RsgA (Flavobacterium psychrophilum (strain ATCC 49511 / DSM 21280 / CIP 103535 / JIP02/86)).